A 141-amino-acid chain; its full sequence is Large-conductance mechanosensitive channel (141 aa).

The next 3 helical transmembrane spans lie at valine 14–leucine 34, isoleucine 38–glycine 58, and glycine 81–valine 101.

Belongs to the MscL family. Homopentamer.

The protein resides in the cell inner membrane. Its function is as follows. Channel that opens in response to stretch forces in the membrane lipid bilayer. May participate in the regulation of osmotic pressure changes within the cell. In Rhizobium rhizogenes (strain K84 / ATCC BAA-868) (Agrobacterium radiobacter), this protein is Large-conductance mechanosensitive channel.